A 143-amino-acid chain; its full sequence is Peptide methionine sulfoxide reductase MsrB (143 aa).

The 124-residue stretch at 16–139 folds into the MsrB domain; sequence DAELRRRLTP…NSAALNFESR (124 aa). Cys55, Cys58, Cys104, and Cys107 together coordinate Zn(2+). Cys128 acts as the Nucleophile in catalysis.

This sequence belongs to the MsrB Met sulfoxide reductase family. It depends on Zn(2+) as a cofactor.

It carries out the reaction L-methionyl-[protein] + [thioredoxin]-disulfide + H2O = L-methionyl-(R)-S-oxide-[protein] + [thioredoxin]-dithiol. The polypeptide is Peptide methionine sulfoxide reductase MsrB (Burkholderia cenocepacia (strain ATCC BAA-245 / DSM 16553 / LMG 16656 / NCTC 13227 / J2315 / CF5610) (Burkholderia cepacia (strain J2315))).